A 446-amino-acid polypeptide reads, in one-letter code: Tubulin beta-2 chain (446 aa).

GTP is bound by residues glutamine 11, glutamate 69, serine 138, glycine 142, threonine 143, glycine 144, asparagine 204, and asparagine 226. A Mg(2+)-binding site is contributed by glutamate 69.

Belongs to the tubulin family. Dimer of alpha and beta chains. A typical microtubule is a hollow water-filled tube with an outer diameter of 25 nm and an inner diameter of 15 nM. Alpha-beta heterodimers associate head-to-tail to form protofilaments running lengthwise along the microtubule wall with the beta-tubulin subunit facing the microtubule plus end conferring a structural polarity. Microtubules usually have 13 protofilaments but different protofilament numbers can be found in some organisms and specialized cells. Mg(2+) is required as a cofactor.

The protein resides in the cytoplasm. It localises to the cytoskeleton. In terms of biological role, tubulin is the major constituent of microtubules, a cylinder consisting of laterally associated linear protofilaments composed of alpha- and beta-tubulin heterodimers. Microtubules grow by the addition of GTP-tubulin dimers to the microtubule end, where a stabilizing cap forms. Below the cap, tubulin dimers are in GDP-bound state, owing to GTPase activity of alpha-tubulin. The chain is Tubulin beta-2 chain (tub2) from Hypocrea rufa (Trichoderma viride).